Here is a 957-residue protein sequence, read N- to C-terminus: ERC protein 2 (957 aa).

Residues 1-13 show a composition bias toward polar residues; sequence MYGSARTITNLEG. The disordered stretch occupies residues 1–44; sequence MYGSARTITNLEGSPSRSPRLPRSPRLGHRRTSSGGGGGTGKTL. Low complexity predominate over residues 14-25; sequence SPSRSPRLPRSP. 2 positions are modified to phosphoserine: S65 and S666. A coiled-coil region spans residues 140-917; it reads RQVRDSTMLD…RMKLMADNYD (778 aa). Residues 918-957 are disordered; that stretch reads DDHHHYHHHHHHHHHRSPGRSQHSNHRPSPDQDDEEGIWA. Over residues 922–943 the composition is skewed to basic residues; it reads HYHHHHHHHHHRSPGRSQHSNH. Positions 948–957 are enriched in acidic residues; the sequence is DQDDEEGIWA.

In terms of assembly, interacts with BSN, ERC1, PPFIA1, PPFIA2, PPFIA3 and PPFIA4. Interacts through its C-terminus with the PDZ domain of RIMS1. Part of a complex consisting of ERC2, RIMS1 and UNC13A.

It localises to the cytoplasm. The protein localises to the synapse. The protein resides in the presynaptic active zone. Its subcellular location is the cytoskeleton. Thought to be involved in the organization of the cytomatrix at the nerve terminals active zone (CAZ) which regulates neurotransmitter release. Seems to act together with BSN. May recruit liprin-alpha proteins to the CAZ. The chain is ERC protein 2 (ERC2) from Homo sapiens (Human).